We begin with the raw amino-acid sequence, 542 residues long: ATP synthase subunit alpha (542 aa).

173–180 (GDRQTGKT) is a binding site for ATP. A disordered region spans residues 518–542 (PLVEKKPDEKHTTPVEQEKIVAGEK). Basic and acidic residues predominate over residues 519-542 (LVEKKPDEKHTTPVEQEKIVAGEK).

Belongs to the ATPase alpha/beta chains family. As to quaternary structure, F-type ATPases have 2 components, CF(1) - the catalytic core - and CF(0) - the membrane proton channel. CF(1) has five subunits: alpha(3), beta(3), gamma(1), delta(1), epsilon(1). CF(0) has three main subunits: a(1), b(2) and c(9-12). The alpha and beta chains form an alternating ring which encloses part of the gamma chain. CF(1) is attached to CF(0) by a central stalk formed by the gamma and epsilon chains, while a peripheral stalk is formed by the delta and b chains.

The protein localises to the cell membrane. The catalysed reaction is ATP + H2O + 4 H(+)(in) = ADP + phosphate + 5 H(+)(out). In terms of biological role, produces ATP from ADP in the presence of a proton gradient across the membrane. The alpha chain is a regulatory subunit. This Bifidobacterium adolescentis (strain ATCC 15703 / DSM 20083 / NCTC 11814 / E194a) protein is ATP synthase subunit alpha.